The primary structure comprises 197 residues: ATP-dependent Clp protease proteolytic subunit (197 aa).

Ser98 acts as the Nucleophile in catalysis. His123 is an active-site residue.

This sequence belongs to the peptidase S14 family. As to quaternary structure, fourteen ClpP subunits assemble into 2 heptameric rings which stack back to back to give a disk-like structure with a central cavity, resembling the structure of eukaryotic proteasomes.

It localises to the cytoplasm. The enzyme catalyses Hydrolysis of proteins to small peptides in the presence of ATP and magnesium. alpha-casein is the usual test substrate. In the absence of ATP, only oligopeptides shorter than five residues are hydrolyzed (such as succinyl-Leu-Tyr-|-NHMec, and Leu-Tyr-Leu-|-Tyr-Trp, in which cleavage of the -Tyr-|-Leu- and -Tyr-|-Trp bonds also occurs).. Functionally, cleaves peptides in various proteins in a process that requires ATP hydrolysis. Has a chymotrypsin-like activity. Plays a major role in the degradation of misfolded proteins. This chain is ATP-dependent Clp protease proteolytic subunit, found in Haemophilus ducreyi (strain 35000HP / ATCC 700724).